The primary structure comprises 71 residues: Small ribosomal subunit protein bS21 (71 aa).

It belongs to the bacterial ribosomal protein bS21 family.

This is Small ribosomal subunit protein bS21 from Marinobacter nauticus (strain ATCC 700491 / DSM 11845 / VT8) (Marinobacter aquaeolei).